Here is a 341-residue protein sequence, read N- to C-terminus: MFGLIGHLTSLEQARDVSRRMGYDEYADQGLEFWSSAPPQIVDEITVTSATGKVIHGRYIESCFLPEMLAARRFKTATRKVLNAMSHAQKHGIDISALGGFTSIIFENFDLASLRQVRDTTLEFERFTTGNTHTAYVICRQVEAAAKTLGIDITQATVAVVGATGDIGSAVCRWLDLKLGVGDLILTARNQERLDNLQAELGRGKILPLEAALPEADFIVWVASMPQGVVIDPATLKQPCVLIDGGYPKNLGSKVQGEGIYVLNGGVVEHCFDIDWQIMSAAEMARPERQMFACFAEAMLLEFEGWHTNFSWGRNQITIEKMEAIGEASVRHGFQPLALAI.

This sequence belongs to the short-chain dehydrogenases/reductases (SDR) family. It depends on a divalent metal cation as a cofactor.

The enzyme catalyses a long-chain fatty aldehyde + holo-[ACP] + NADP(+) = a long-chain fatty acyl-[ACP] + NADPH + H(+). The catalysed reaction is a long-chain fatty aldehyde + holo-[ACP] + NAD(+) = a long-chain fatty acyl-[ACP] + NADH + H(+). Catalyzes the NADP-dependent reduction of long-chain acyl-ACP to the corresponding fatty aldehyde. Involved in the biosynthesis of alkanes, mainly heptadecane and pentadecane, by producing the fatty aldehydes used by aldehyde decarbonylase. This Synechococcus elongatus (strain ATCC 33912 / PCC 7942 / FACHB-805) (Anacystis nidulans R2) protein is Long-chain acyl-[acyl-carrier-protein] reductase.